The chain runs to 90 residues: uncharacterized protein (90 aa).

Residues 46–62 (MALLVVFLVSLFACTTI) traverse the membrane as a helical segment.

The protein resides in the membrane. This is an uncharacterized protein from Haemophilus influenzae (strain ATCC 51907 / DSM 11121 / KW20 / Rd).